Consider the following 245-residue polypeptide: Carboxy-S-adenosyl-L-methionine synthase (245 aa).

Residues Tyr-39, 64–66, 117–118, and Arg-199 each bind S-adenosyl-L-methionine; these read GSS and DI.

The protein belongs to the class I-like SAM-binding methyltransferase superfamily. Cx-SAM synthase family. Homodimer.

It carries out the reaction prephenate + S-adenosyl-L-methionine = carboxy-S-adenosyl-L-methionine + 3-phenylpyruvate + H2O. Catalyzes the conversion of S-adenosyl-L-methionine (SAM) to carboxy-S-adenosyl-L-methionine (Cx-SAM). The polypeptide is Carboxy-S-adenosyl-L-methionine synthase (Desulfotalea psychrophila (strain LSv54 / DSM 12343)).